The sequence spans 484 residues: Glutamate--tRNA ligase (484 aa).

Positions 11-21 (PSPTGLLHIGN) match the 'HIGH' region motif. The 'KMSKS' region motif lies at 255-259 (KLSKR). Lys258 contributes to the ATP binding site.

Belongs to the class-I aminoacyl-tRNA synthetase family. Glutamate--tRNA ligase type 1 subfamily. As to quaternary structure, monomer.

The protein localises to the cytoplasm. The enzyme catalyses tRNA(Glu) + L-glutamate + ATP = L-glutamyl-tRNA(Glu) + AMP + diphosphate. In terms of biological role, catalyzes the attachment of glutamate to tRNA(Glu) in a two-step reaction: glutamate is first activated by ATP to form Glu-AMP and then transferred to the acceptor end of tRNA(Glu). This chain is Glutamate--tRNA ligase, found in Streptococcus thermophilus (strain CNRZ 1066).